The following is a 219-amino-acid chain: 2,3-bisphosphoglycerate-dependent phosphoglycerate mutase 2 (219 aa).

Substrate contacts are provided by residues 8–15, 21–22, Arg58, 85–88, Lys96, 112–113, and 156–157; these read RHGQSIWN, TG, ERHY, RR, and GN. His9 functions as the Tele-phosphohistidine intermediate in the catalytic mechanism. The active-site Proton donor/acceptor is Glu85.

It belongs to the phosphoglycerate mutase family. BPG-dependent PGAM subfamily.

It carries out the reaction (2R)-2-phosphoglycerate = (2R)-3-phosphoglycerate. Its pathway is carbohydrate degradation; glycolysis; pyruvate from D-glyceraldehyde 3-phosphate: step 3/5. Functionally, catalyzes the interconversion of 2-phosphoglycerate and 3-phosphoglycerate. In Gloeobacter violaceus (strain ATCC 29082 / PCC 7421), this protein is 2,3-bisphosphoglycerate-dependent phosphoglycerate mutase 2.